The following is a 554-amino-acid chain: Intraflagellar transport protein 56 (554 aa).

The tract at residues 1–27 (MMLSRAKPAVGGESPHTDKRKKKGRKI) is disordered. The span at 18-27 (DKRKKKGRKI) shows a compositional bias: basic residues. 4 TPR repeats span residues 57–90 (DDTN…ENCN), 92–125 (EVWV…LQNR), 151–184 (KEDQ…NREY), and 468–501 (ANDC…EGKR).

The protein belongs to the IFT56 family. In terms of assembly, component of the IFT complex B. Interacts with IFT46; the interaction is direct. High expression detected in testis. Detected also retina, kidney, lung and brain tissue. The expression level is low in spleen. Expressed in the developing liver. Present in the airway epithelial cells and the testes (at protein level).

The protein resides in the cell projection. The protein localises to the cilium. Functionally, component of the intraflagellar transport (IFT) complex B required for transport of proteins in the motile cilium. Required for transport of specific ciliary cargo proteins related to motility, while it is neither required for IFT complex B assembly or motion nor for cilium assembly. Required for efficient coupling between the accumulation of GLI2 and GLI3 at the ciliary tips and their dissociation from the negative regulator SUFU. Plays a key role in maintaining the integrity of the IFT complex B and the proper ciliary localization of the IFT complex B components. Not required for IFT complex A ciliary localization or function. Essential for maintaining proper microtubule organization within the ciliary axoneme. This Mus musculus (Mouse) protein is Intraflagellar transport protein 56.